The primary structure comprises 342 residues: Ketol-acid reductoisomerase (NADP(+)) (342 aa).

The KARI N-terminal Rossmann domain occupies 2–181 (VKVYYNGDIK…GGARAGVLET (180 aa)). NADP(+) contacts are provided by residues 25-28 (YGSQ), arginine 48, serine 52, and 82-85 (DEQQ). Histidine 107 is an active-site residue. NADP(+) is bound at residue glycine 133. The region spanning 182–327 (TFKEETETDL…RKLREMMPFV (146 aa)) is the KARI C-terminal knotted domain. The Mg(2+) site is built by aspartate 190, glutamate 194, glutamate 226, and glutamate 230. Substrate is bound at residue serine 251.

The protein belongs to the ketol-acid reductoisomerase family. Requires Mg(2+) as cofactor.

It carries out the reaction (2R)-2,3-dihydroxy-3-methylbutanoate + NADP(+) = (2S)-2-acetolactate + NADPH + H(+). The enzyme catalyses (2R,3R)-2,3-dihydroxy-3-methylpentanoate + NADP(+) = (S)-2-ethyl-2-hydroxy-3-oxobutanoate + NADPH + H(+). The protein operates within amino-acid biosynthesis; L-isoleucine biosynthesis; L-isoleucine from 2-oxobutanoate: step 2/4. Its pathway is amino-acid biosynthesis; L-valine biosynthesis; L-valine from pyruvate: step 2/4. In terms of biological role, involved in the biosynthesis of branched-chain amino acids (BCAA). Catalyzes an alkyl-migration followed by a ketol-acid reduction of (S)-2-acetolactate (S2AL) to yield (R)-2,3-dihydroxy-isovalerate. In the isomerase reaction, S2AL is rearranged via a Mg-dependent methyl migration to produce 3-hydroxy-3-methyl-2-ketobutyrate (HMKB). In the reductase reaction, this 2-ketoacid undergoes a metal-dependent reduction by NADPH to yield (R)-2,3-dihydroxy-isovalerate. The protein is Ketol-acid reductoisomerase (NADP(+)) of Bacillus subtilis (strain 168).